Here is a 74-residue protein sequence, read N- to C-terminus: Small ribosomal subunit protein uS15 (74 aa).

Belongs to the universal ribosomal protein uS15 family. As to quaternary structure, part of the 30S ribosomal subunit. Forms a bridge to the 50S subunit in the 70S ribosome, contacting the 23S rRNA.

Its function is as follows. One of the primary rRNA binding proteins, it binds directly to 16S rRNA where it helps nucleate assembly of the platform of the 30S subunit by binding and bridging several RNA helices of the 16S rRNA. Functionally, forms an intersubunit bridge (bridge B4) with the 23S rRNA of the 50S subunit in the ribosome. The chain is Small ribosomal subunit protein uS15 from Onion yellows phytoplasma (strain OY-M).